Reading from the N-terminus, the 310-residue chain is GPN-loop GTPase 2 (310 aa).

Residue A2 is modified to N-acetylalanine. 19–24 provides a ligand contact to GTP; sequence GSGKTT. Positions 76–78 match the Gly-Pro-Asn (GPN)-loop; involved in dimer interface motif; the sequence is GPN. 178–181 serves as a coordination point for GTP; that stretch reads SKMD.

This sequence belongs to the GPN-loop GTPase family. Heterodimers with GPN1 or GPN3. Binds to RNA polymerase II (RNAPII).

In terms of biological role, small GTPase required for proper localization of RNA polymerase II and III (RNAPII and RNAPIII). May act at an RNAP assembly step prior to nuclear import. The polypeptide is GPN-loop GTPase 2 (Homo sapiens (Human)).